The following is a 145-amino-acid chain: 3-hydroxyacyl-[acyl-carrier-protein] dehydratase FabZ (145 aa).

His48 is a catalytic residue.

Belongs to the thioester dehydratase family. FabZ subfamily.

Its subcellular location is the cytoplasm. It carries out the reaction a (3R)-hydroxyacyl-[ACP] = a (2E)-enoyl-[ACP] + H2O. Its function is as follows. Involved in unsaturated fatty acids biosynthesis. Catalyzes the dehydration of short chain beta-hydroxyacyl-ACPs and long chain saturated and unsaturated beta-hydroxyacyl-ACPs. This is 3-hydroxyacyl-[acyl-carrier-protein] dehydratase FabZ from Campylobacter hominis (strain ATCC BAA-381 / DSM 21671 / CCUG 45161 / LMG 19568 / NCTC 13146 / CH001A).